The primary structure comprises 136 residues: C-type natriuretic peptide prohormone (136 aa).

A signal peptide spans 1–21 (MSGQTSFYCGLLLVLLIQAQA). Cys-120 and Cys-136 form a disulfide bridge.

The protein belongs to the natriuretic peptide family. CNP-115 is differentially processed to produce CNP-38 and CNP-39 in the heart and CNP-22 in the brain.

It localises to the secreted. Functionally, hormone which may be vasoactive and natriuretic. Has a cGMP-stimulating activity. This Triakis scyllium (Banded houndshark) protein is C-type natriuretic peptide prohormone.